We begin with the raw amino-acid sequence, 678 residues long: Glycine--tRNA ligase beta subunit (678 aa).

The protein belongs to the class-II aminoacyl-tRNA synthetase family. In terms of assembly, tetramer of two alpha and two beta subunits.

The protein resides in the cytoplasm. It carries out the reaction tRNA(Gly) + glycine + ATP = glycyl-tRNA(Gly) + AMP + diphosphate. This is Glycine--tRNA ligase beta subunit from Streptococcus pneumoniae (strain 70585).